A 294-amino-acid polypeptide reads, in one-letter code: Nucleotide-binding protein NT01CX_1284 (294 aa).

G8 to S15 provides a ligand contact to ATP. D59–G62 provides a ligand contact to GTP.

It belongs to the RapZ-like family.

Functionally, displays ATPase and GTPase activities. The protein is Nucleotide-binding protein NT01CX_1284 of Clostridium novyi (strain NT).